The primary structure comprises 237 residues: Methylosome subunit pICln (237 aa).

S2 is modified (N-acetylserine). Phosphoserine is present on residues S102, S144, S193, S195, S198, and S210. Residues 135–159 (LHPDPEDEDSDDYDGEEYDVEAHEQ) form a disordered region. A compositionally biased stretch (acidic residues) spans 139–153 (PEDEDSDDYDGEEYD). T223 bears the Phosphothreonine mark.

Belongs to the pICln (TC 1.A.47) family. In terms of assembly, component of the methylosome, a 20S complex containing at least PRMT5/SKB1, WDR77/MEP50 and CLNS1A/pICln. May mediate SNRPD1 and SNRPD3 methylation. Forms a 6S pICln-Sm complex composed of CLNS1A/pICln, SNRPD1, SNRPD2, SNRPE, SNRPF and SNRPG; ring-like structure where CLNS1A/pICln mimics additional Sm proteins and which is unable to assemble into the core snRNP. Interacts with LSM10 and LSM11.

It is found in the cytoplasm. The protein localises to the cytosol. Its subcellular location is the nucleus. The protein resides in the cytoskeleton. In terms of biological role, involved in both the assembly of spliceosomal snRNPs and the methylation of Sm proteins. Chaperone that regulates the assembly of spliceosomal U1, U2, U4 and U5 small nuclear ribonucleoproteins (snRNPs), the building blocks of the spliceosome, and thereby plays an important role in the splicing of cellular pre-mRNAs. Most spliceosomal snRNPs contain a common set of Sm proteins SNRPB, SNRPD1, SNRPD2, SNRPD3, SNRPE, SNRPF and SNRPG that assemble in a heptameric protein ring on the Sm site of the small nuclear RNA to form the core snRNP (Sm core). In the cytosol, the Sm proteins SNRPD1, SNRPD2, SNRPE, SNRPF and SNRPG are trapped in an inactive 6S pICln-Sm complex by the chaperone CLNS1A that controls the assembly of the core snRNP. Dissociation by the SMN complex of CLNS1A from the trapped Sm proteins and their transfer to an SMN-Sm complex triggers the assembly of core snRNPs and their transport to the nucleus. The sequence is that of Methylosome subunit pICln (CLNS1A) from Homo sapiens (Human).